The chain runs to 146 residues: Hemoglobin subunit beta (146 aa).

In terms of domain architecture, Globin spans 2–146 (HWSAEEKQLI…VAHALARKYH (145 aa)). Residues His63 and His92 each coordinate heme b.

Belongs to the globin family. As to quaternary structure, heterotetramer of two alpha chains and two beta chains. As to expression, red blood cells.

Functionally, involved in oxygen transport from the lung to the various peripheral tissues. The chain is Hemoglobin subunit beta (HBB) from Anser anser anser (Western greylag goose).